A 373-amino-acid chain; its full sequence is Chaperone protein DnaJ (373 aa).

The J domain occupies 4–68 (NYYQILGVSK…QKRAAYDRLG (65 aa)). The CR-type zinc finger occupies 136 to 214 (GIEKNINFSS…CHGMGRYHKQ (79 aa)). Residues Cys-149, Cys-152, Cys-166, Cys-169, Cys-188, Cys-191, Cys-202, and Cys-205 each contribute to the Zn(2+) site. CXXCXGXG motif repeat units follow at residues 149–156 (CDTCHGSG), 166–173 (CDACSGVG), 188–195 (CHKCQGNG), and 202–209 (CKKCHGMG).

It belongs to the DnaJ family. As to quaternary structure, homodimer. The cofactor is Zn(2+).

Its subcellular location is the cytoplasm. Its function is as follows. Participates actively in the response to hyperosmotic and heat shock by preventing the aggregation of stress-denatured proteins and by disaggregating proteins, also in an autonomous, DnaK-independent fashion. Unfolded proteins bind initially to DnaJ; upon interaction with the DnaJ-bound protein, DnaK hydrolyzes its bound ATP, resulting in the formation of a stable complex. GrpE releases ADP from DnaK; ATP binding to DnaK triggers the release of the substrate protein, thus completing the reaction cycle. Several rounds of ATP-dependent interactions between DnaJ, DnaK and GrpE are required for fully efficient folding. Also involved, together with DnaK and GrpE, in the DNA replication of plasmids through activation of initiation proteins. This chain is Chaperone protein DnaJ, found in Rickettsia rickettsii (strain Iowa).